A 274-amino-acid chain; its full sequence is NH(3)-dependent NAD(+) synthetase (274 aa).

46 to 53 (GISGGQDS) contacts ATP. D52 is a binding site for Mg(2+). R140 contributes to the deamido-NAD(+) binding site. T160 provides a ligand contact to ATP. E165 is a Mg(2+) binding site. 2 residues coordinate deamido-NAD(+): K173 and D180. Residues K189 and T211 each coordinate ATP. 260–261 (HK) provides a ligand contact to deamido-NAD(+).

Belongs to the NAD synthetase family. As to quaternary structure, homodimer.

It catalyses the reaction deamido-NAD(+) + NH4(+) + ATP = AMP + diphosphate + NAD(+) + H(+). The protein operates within cofactor biosynthesis; NAD(+) biosynthesis; NAD(+) from deamido-NAD(+) (ammonia route): step 1/1. Its function is as follows. Catalyzes the ATP-dependent amidation of deamido-NAD to form NAD. Uses ammonia as a nitrogen source. This is NH(3)-dependent NAD(+) synthetase from Listeria monocytogenes serotype 4b (strain CLIP80459).